Here is a 139-residue protein sequence, read N- to C-terminus: Trafficking protein particle complex subunit 2-like protein (139 aa).

Belongs to the TRAPP small subunits family. Sedlin subfamily. In terms of assembly, component of the multisubunit TRAPP (transport protein particle) complex, which includes at least TRAPPC2, TRAPPC2L, TRAPPC3, TRAPPC3L, TRAPPC4, TRAPPC5, TRAPPC8, TRAPPC9, TRAPPC10, TRAPPC11 and TRAPPC12. Interacts with the heterodimer TRAPPC3-TRAPPC6A.

Its subcellular location is the cytoplasm. It is found in the perinuclear region. It localises to the endoplasmic reticulum. The protein resides in the golgi apparatus. Functionally, may play a role in vesicular transport from endoplasmic reticulum to Golgi. This is Trafficking protein particle complex subunit 2-like protein (TRAPPC2L) from Bos taurus (Bovine).